A 62-amino-acid chain; its full sequence is SPbeta prophage-derived uncharacterized protein YonU (62 aa).

A coiled-coil region spans residues 1–32 (MEKKFLDAIQQLTKELEMLKKDIDSIKEATVR).

This is SPbeta prophage-derived uncharacterized protein YonU (yonU) from Bacillus subtilis (strain 168).